The sequence spans 73 residues: Toxin Td5 (73 aa).

Residues 1-7 (IGMVVEC) form the signal peptide. The LCN-type CS-alpha/beta domain occupies 8–70 (KDGYLVGNDG…IWNSATNRCR (63 aa)). Disulfide bonds link C18-C69, C22-C44, C30-C50, and C34-C52. Residue R70 is modified to Arginine amide.

It belongs to the long (4 C-C) scorpion toxin superfamily. Sodium channel inhibitor family. Beta subfamily. As to expression, expressed by the venom gland.

The protein resides in the secreted. In terms of biological role, beta toxins bind voltage-independently at site-4 of sodium channels (Nav) and shift the voltage of activation toward more negative potentials thereby affecting sodium channel activation and promoting spontaneous and repetitive firing. The protein is Toxin Td5 of Tityus discrepans (Venezuelan scorpion).